Consider the following 188-residue polypeptide: dCTP deaminase (188 aa).

DCTP contacts are provided by residues 111–116, 135–137, Gln156, Tyr170, and Gln180; these read KSTYAR and TLE. Glu137 (proton donor/acceptor) is an active-site residue.

This sequence belongs to the dCTP deaminase family. In terms of assembly, homotrimer.

The enzyme catalyses dCTP + H2O + H(+) = dUTP + NH4(+). It functions in the pathway pyrimidine metabolism; dUMP biosynthesis; dUMP from dCTP (dUTP route): step 1/2. In terms of biological role, catalyzes the deamination of dCTP to dUTP. This is dCTP deaminase from Pseudomonas putida (strain GB-1).